A 752-amino-acid polypeptide reads, in one-letter code: Exocyst complex component EXO84B (752 aa).

Disordered stretches follow at residues 511 to 532 (QTGQ…NPEQ) and 724 to 752 (TKGN…HGSY). Basic and acidic residues predominate over residues 515-532 (RTDDLRRPLDRQNRNPEQ). Residues 733–752 (SPTASVSAQSVSSARSHGSY) show a composition bias toward low complexity.

It belongs to the EXO84 family. The exocyst complex is composed of SEC3, SEC5, SEC6, SEC8, SEC10, EXO70A1 and EXO84B. Interacts with SEC6, SEC10, SEC15B and EXO70A1. Interacts with EXO70B1. Binds directly to B1L.

Its subcellular location is the cytoplasm. The protein resides in the cytosol. It is found in the perinuclear region. The protein localises to the cytoskeleton. It localises to the phragmoplast. Its subcellular location is the secreted. The protein resides in the cell wall. It is found in the cell membrane. Its function is as follows. Component of the exocyst complex involved in the docking of exocytic vesicles with fusion sites on the plasma membrane during regulated or polarized secretion. Involved in polarized cell growth and organ morphogenesis. During cytokinesis, involved in cell plate initiation, cell plate maturation and formation of new primary cell wall. Probable component of an exocyst subcomplex specifically involved in autophagy-related, Golgi-independent membrane traffic to the vacuole. Regulates autophagosome formation and autophagy-related Golgi-independent import into the vacuole. Mediates ABCG36/PEN3 outer-membrane polarity at the periphery of lateral root cap and root epidermal cells. This is Exocyst complex component EXO84B from Arabidopsis thaliana (Mouse-ear cress).